We begin with the raw amino-acid sequence, 293 residues long: Ribosomal protein L11 methyltransferase (293 aa).

4 residues coordinate S-adenosyl-L-methionine: Thr-145, Gly-166, Asp-188, and Asn-230.

The protein belongs to the methyltransferase superfamily. PrmA family.

It is found in the cytoplasm. It carries out the reaction L-lysyl-[protein] + 3 S-adenosyl-L-methionine = N(6),N(6),N(6)-trimethyl-L-lysyl-[protein] + 3 S-adenosyl-L-homocysteine + 3 H(+). Functionally, methylates ribosomal protein L11. In Salmonella agona (strain SL483), this protein is Ribosomal protein L11 methyltransferase.